The sequence spans 220 residues: FMN-dependent NADH:quinone oxidoreductase 1 (220 aa).

Position 18 to 20 (18 to 20 (SVS)) interacts with FMN.

It belongs to the azoreductase type 1 family. In terms of assembly, homodimer. It depends on FMN as a cofactor.

It catalyses the reaction 2 a quinone + NADH + H(+) = 2 a 1,4-benzosemiquinone + NAD(+). It carries out the reaction N,N-dimethyl-1,4-phenylenediamine + anthranilate + 2 NAD(+) = 2-(4-dimethylaminophenyl)diazenylbenzoate + 2 NADH + 2 H(+). Quinone reductase that provides resistance to thiol-specific stress caused by electrophilic quinones. In terms of biological role, also exhibits azoreductase activity. Catalyzes the reductive cleavage of the azo bond in aromatic azo compounds to the corresponding amines. The chain is FMN-dependent NADH:quinone oxidoreductase 1 from Bacillus anthracis.